The sequence spans 392 residues: Bifunctional enzyme IspD/IspF (392 aa).

2-C-methyl-D-erythritol 4-phosphate cytidylyltransferase stretches follow at residues 1-234 and 1-235; these read MTES…MMRT and MTES…MRTA. The interval 235–392 is 2-C-methyl-D-erythritol 2,4-cyclodiphosphate synthase; that stretch reads AVGMGYDVHR…AVATIQLPET (158 aa). 2 residues coordinate a divalent metal cation: Asp-241 and His-243. 4-CDP-2-C-methyl-D-erythritol 2-phosphate is bound by residues 241–243 and 267–268; these read DVH and HS. His-275 serves as a coordination point for a divalent metal cation. 4-CDP-2-C-methyl-D-erythritol 2-phosphate contacts are provided by residues 289 to 291, 365 to 368, Phe-372, and Arg-375; these read DIG and TTTE.

This sequence in the N-terminal section; belongs to the IspD/TarI cytidylyltransferase family. IspD subfamily. It in the C-terminal section; belongs to the IspF family. It depends on a divalent metal cation as a cofactor.

The catalysed reaction is 2-C-methyl-D-erythritol 4-phosphate + CTP + H(+) = 4-CDP-2-C-methyl-D-erythritol + diphosphate. It catalyses the reaction 4-CDP-2-C-methyl-D-erythritol 2-phosphate = 2-C-methyl-D-erythritol 2,4-cyclic diphosphate + CMP. It functions in the pathway isoprenoid biosynthesis; isopentenyl diphosphate biosynthesis via DXP pathway; isopentenyl diphosphate from 1-deoxy-D-xylulose 5-phosphate: step 2/6. It participates in isoprenoid biosynthesis; isopentenyl diphosphate biosynthesis via DXP pathway; isopentenyl diphosphate from 1-deoxy-D-xylulose 5-phosphate: step 4/6. Bifunctional enzyme that catalyzes the formation of 4-diphosphocytidyl-2-C-methyl-D-erythritol from CTP and 2-C-methyl-D-erythritol 4-phosphate (MEP) (IspD), and catalyzes the conversion of 4-diphosphocytidyl-2-C-methyl-D-erythritol 2-phosphate (CDP-ME2P) to 2-C-methyl-D-erythritol 2,4-cyclodiphosphate (ME-CPP) with a corresponding release of cytidine 5-monophosphate (CMP) (IspF). The polypeptide is Bifunctional enzyme IspD/IspF (Sphingopyxis alaskensis (strain DSM 13593 / LMG 18877 / RB2256) (Sphingomonas alaskensis)).